Here is a 684-residue protein sequence, read N- to C-terminus: Cleavage and polyadenylation specificity factor subunit 3 (684 aa).

An N-acetylserine modification is found at Ser-2. Zn(2+) contacts are provided by His-71, His-73, Asp-75, His-76, His-158, and Asp-179. The Proton donor role is filled by His-396. Residue His-418 participates in Zn(2+) binding. Glycyl lysine isopeptide (Lys-Gly) (interchain with G-Cter in SUMO) cross-links involve residues Lys-462, Lys-465, and Lys-545. The residue at position 659 (Ser-659) is a Phosphoserine. Residue Thr-681 is modified to Phosphothreonine.

The protein belongs to the metallo-beta-lactamase superfamily. RNA-metabolizing metallo-beta-lactamase-like family. CPSF3 subfamily. As to quaternary structure, component of the cleavage and polyadenylation specificity factor (CPSF) complex, composed of CPSF1, CPSF2, CPSF3, CPSF4 and FIP1L1. Interacts with CPSF2, CSTF2 and SYMPK. Interacts with TUT1; the interaction is direct and mediates the recruitment of the CPSF complex on the 3'UTR of pre-mRNAs. Interacts with WDR33. Interacts with ZC3H3. Zn(2+) is required as a cofactor. In terms of processing, sumoylated on Lys-462, Lys-465 and Lys-545, preferentially by SUMO3.

The protein resides in the nucleus. Functionally, component of the cleavage and polyadenylation specificity factor (CPSF) complex that plays a key role in pre-mRNA 3'-end formation, recognizing the AAUAAA signal sequence and interacting with poly(A) polymerase and other factors to bring about cleavage and poly(A) addition. Has endonuclease activity, and functions as an mRNA 3'-end-processing endonuclease. Also involved in the histone 3'-end pre-mRNA processing. U7 snRNP-dependent protein that induces both the 3'-endoribonucleolytic cleavage of histone pre-mRNAs and acts as a 5' to 3' exonuclease for degrading the subsequent downstream cleavage product (DCP) of mature histone mRNAs. Cleavage occurs after the 5'-ACCCA-3' sequence in the histone pre-mRNA leaving a 3'hydroxyl group on the upstream fragment containing the stem loop (SL) and 5' phosphate on the downstream cleavage product (DCP) starting with CU nucleotides. The U7-dependent 5' to 3' exonuclease activity is processive and degrades the DCP RNA substrate even after complete removal of the U7-binding site. Binds to the downstream cleavage product (DCP) of histone pre-mRNAs and the cleaved DCP RNA substrate in a U7 snRNP dependent manner. Required for entering/progressing through S-phase of the cell cycle. Required for the selective processing of microRNAs (miRNAs) during embryonic stem cell differentiation via its interaction with ISY1. Required for the biogenesis of all miRNAs from the pri-miR-17-92 primary transcript except miR-92a. Only required for the biogenesis of miR-290 and miR-96 from the pri-miR-290-295 and pri-miR-96-183 primary transcripts, respectively. In Homo sapiens (Human), this protein is Cleavage and polyadenylation specificity factor subunit 3 (CPSF3).